The primary structure comprises 233 residues: uncharacterized protein (233 aa).

It belongs to the asfivirus H233R family.

This is an uncharacterized protein from African swine fever virus (strain Badajoz 1971 Vero-adapted) (Ba71V).